Reading from the N-terminus, the 150-residue chain is Probable histone H2A.7 (150 aa).

Basic residues predominate over residues 1–12; it reads MESTGKVKKAFG. Disordered regions lie at residues 1-27 and 129-150; these read MEST…SVSK and KSAT…PKKA. Position 146 is a phosphoserine (Ser-146). An SPKK motif motif is present at residues 146-149; sequence SPKK.

This sequence belongs to the histone H2A family. The nucleosome is a histone octamer containing two molecules each of H2A, H2B, H3 and H4 assembled in one H3-H4 heterotetramer and two H2A-H2B heterodimers. The octamer wraps approximately 147 bp of DNA. In terms of processing, not ubiquitinated. As to expression, strong expression through-out the roots and leaves. Also found in meristems and dividing cells.

It localises to the nucleus. The protein resides in the chromosome. Its function is as follows. Core component of nucleosome. Nucleosomes wrap and compact DNA into chromatin, limiting DNA accessibility to the cellular machineries which require DNA as a template. Histones thereby play a central role in transcription regulation, DNA repair, DNA replication and chromosomal stability. DNA accessibility is regulated via a complex set of post-translational modifications of histones, also called histone code, and nucleosome remodeling. The protein is Probable histone H2A.7 of Arabidopsis thaliana (Mouse-ear cress).